Here is a 231-residue protein sequence, read N- to C-terminus: Female protein (231 aa).

An N-terminal signal peptide occupies residues 1-19 (MDKMLLLLGVSILLSEVFA). The Pentraxin (PTX) domain maps to 24–223 (TGKVFVFPRE…YAVIRPRCVA (200 aa)). N51 carries N-linked (GlcNAc...) asparagine glycosylation. C55 and C114 are oxidised to a cystine. 6 residues coordinate Ca(2+): D77, N78, E155, Q156, D157, and Q167.

Belongs to the pentraxin family. In terms of assembly, homopentamer. Pentraxin (or pentaxin) have a discoid arrangement of 5 non-covalently bound subunits. Ca(2+) is required as a cofactor.

The protein resides in the secreted. This Nothocricetulus migratorius (Gray dwarf hamster) protein is Female protein.